Reading from the N-terminus, the 256-residue chain is Indole-3-glycerol phosphate synthase (256 aa).

The protein belongs to the TrpC family.

It carries out the reaction 1-(2-carboxyphenylamino)-1-deoxy-D-ribulose 5-phosphate + H(+) = (1S,2R)-1-C-(indol-3-yl)glycerol 3-phosphate + CO2 + H2O. The protein operates within amino-acid biosynthesis; L-tryptophan biosynthesis; L-tryptophan from chorismate: step 4/5. The chain is Indole-3-glycerol phosphate synthase from Chlorobaculum tepidum (strain ATCC 49652 / DSM 12025 / NBRC 103806 / TLS) (Chlorobium tepidum).